The chain runs to 122 residues: Small ribosomal subunit protein uS13 (122 aa).

Residues 89–122 (GLRHRRGLPARGQRTKTNARTRKGPRRGVAGKRK) are disordered.

Belongs to the universal ribosomal protein uS13 family. In terms of assembly, part of the 30S ribosomal subunit. Forms a loose heterodimer with protein S19. Forms two bridges to the 50S subunit in the 70S ribosome.

Its function is as follows. Located at the top of the head of the 30S subunit, it contacts several helices of the 16S rRNA. In the 70S ribosome it contacts the 23S rRNA (bridge B1a) and protein L5 of the 50S subunit (bridge B1b), connecting the 2 subunits; these bridges are implicated in subunit movement. Contacts the tRNAs in the A and P-sites. This Oleidesulfovibrio alaskensis (strain ATCC BAA-1058 / DSM 17464 / G20) (Desulfovibrio alaskensis) protein is Small ribosomal subunit protein uS13.